The primary structure comprises 151 residues: Small ribosomal subunit protein uS13 (151 aa).

It belongs to the universal ribosomal protein uS13 family. In terms of assembly, part of the 30S ribosomal subunit. Forms a loose heterodimer with protein S19. Forms two bridges to the 50S subunit in the 70S ribosome.

Its function is as follows. Located at the top of the head of the 30S subunit, it contacts several helices of the 16S rRNA. In the 70S ribosome it contacts the 23S rRNA (bridge B1a) and protein L5 of the 50S subunit (bridge B1b), connecting the 2 subunits; these bridges are implicated in subunit movement. The sequence is that of Small ribosomal subunit protein uS13 from Hyperthermus butylicus (strain DSM 5456 / JCM 9403 / PLM1-5).